An 801-amino-acid chain; its full sequence is MKFSESWLREWVNPAVTTDELTHQITMAGLEVDDVLPVAGSFTGVKVGHVVECGQHPDADKLRVTKVDVGEEELLDIVCGAHNCRQGLKVAVATVGAVLPGDFKIKKAKLRGQPSHGMLCSFTELGIDVESDGIMELAEDAVIGTDFREFLGLDDVTVDVDLTANRADCFSIRGLAREVGVLNRADVTEPSVEAVAPSIEDKVSIEVKAPAACPRYLGRVVKNVNVQAETPLWMQEKLRRCGIRSIDPVVDITNYVLLEQGQPMHAFDLAKIEGGIVVRMAEQGEKLTLLDGSEAELNADTLVVADHNKALAIAGIFGGEESGVTTETKDVLLECAFFAPDHIRGRARSYGLHTDSSMRFERGVDYALQVSAMERATQLLVEICGGEVAPVVAVESEADLPKPNKVALRRTKLDNLLGHHIADADVVEILERLGLTVEASEEGWVAVAPTWRFDIAIEQDLIEEVGRIYGYDNIPNQNPAAALKMHNHVEADLPLKRVRDLLVDRGYHEAITYSFVEPEQQKLVVPGVEPLVLPNPISADMSAMRLGLIQGLLNTVVHNQKRQQPRVRLFEYGLRFIPCESAENGMRQEPMLAGVIAGTRGEEHWDIETNTVDFFDLKGDLEAVLELSANEKAYSFAALSPESKKANPALHPGQSAAIIVDGKEVGVIGTVHPELERKFGLNGRTIVFEIEWSAINSKVIPEAVALSKFPSNRRDIAVVVDEAVASGDIVNACLEQGGEFLKDAKLFDVYVGKGVEEGKKSLAIALTLQSLERTLEDADIAGAVDAIVAHVSEKFGAALRD.

Residues 39–148 (AGSFTGVKVG…EDAVIGTDFR (110 aa)) form the tRNA-binding domain. A B5 domain is found at 401–476 (PKPNKVALRR…RIYGYDNIPN (76 aa)). Residues aspartate 454, aspartate 460, glutamate 463, and glutamate 464 each coordinate Mg(2+). The FDX-ACB domain maps to 707-800 (SKFPSNRRDI…VSEKFGAALR (94 aa)).

Belongs to the phenylalanyl-tRNA synthetase beta subunit family. Type 1 subfamily. As to quaternary structure, tetramer of two alpha and two beta subunits. It depends on Mg(2+) as a cofactor.

It localises to the cytoplasm. The enzyme catalyses tRNA(Phe) + L-phenylalanine + ATP = L-phenylalanyl-tRNA(Phe) + AMP + diphosphate + H(+). This is Phenylalanine--tRNA ligase beta subunit from Vibrio parahaemolyticus serotype O3:K6 (strain RIMD 2210633).